Here is a 364-residue protein sequence, read N- to C-terminus: Formimidoylglutamase (364 aa).

The Mn(2+) site is built by H133, D189, H191, D193, D286, and D288.

Belongs to the arginase family. Mn(2+) is required as a cofactor.

The enzyme catalyses N-formimidoyl-L-glutamate + H2O = formamide + L-glutamate. The protein operates within amino-acid degradation; L-histidine degradation into L-glutamate; L-glutamate from N-formimidoyl-L-glutamate (hydrolase route): step 1/1. Its function is as follows. Catalyzes the conversion of N-formimidoyl-L-glutamate to L-glutamate and formamide. The protein is Formimidoylglutamase of Photobacterium profundum (strain SS9).